A 505-amino-acid polypeptide reads, in one-letter code: Sucrose porin (505 aa).

An N-terminal signal peptide occupies residues 1–22 (MYKKRKLAILIALLTGTAAAHG). The disordered stretch occupies residues 44-94 (ETRASTAESRAASAEQKVQQLTQQQQQTQATTQQVARRTTQLEEKAERPGG). Low complexity predominate over residues 46–82 (RASTAESRAASAEQKVQQLTQQQQQTQATTQQVARRT). The segment covering 83–93 (TQLEEKAERPG) has biased composition (basic and acidic residues).

The protein belongs to the porin LamB (TC 1.B.3) family. As to quaternary structure, homotrimer.

The protein localises to the cell outer membrane. Porin for sucrose uptake. In Klebsiella pneumoniae, this protein is Sucrose porin (scrY).